We begin with the raw amino-acid sequence, 154 residues long: 6,7-dimethyl-8-ribityllumazine synthase (154 aa).

Residues F22, 57 to 59 (VCE), and 81 to 83 (TVI) contribute to the 5-amino-6-(D-ribitylamino)uracil site. 86-87 (KT) is a binding site for (2S)-2-hydroxy-3-oxobutyl phosphate. The active-site Proton donor is H89. Residue V114 participates in 5-amino-6-(D-ribitylamino)uracil binding. Position 128 (R128) interacts with (2S)-2-hydroxy-3-oxobutyl phosphate.

It belongs to the DMRL synthase family. Forms an icosahedral capsid composed of 60 subunits, arranged as a dodecamer of pentamers.

It catalyses the reaction (2S)-2-hydroxy-3-oxobutyl phosphate + 5-amino-6-(D-ribitylamino)uracil = 6,7-dimethyl-8-(1-D-ribityl)lumazine + phosphate + 2 H2O + H(+). It functions in the pathway cofactor biosynthesis; riboflavin biosynthesis; riboflavin from 2-hydroxy-3-oxobutyl phosphate and 5-amino-6-(D-ribitylamino)uracil: step 1/2. Its function is as follows. Catalyzes the formation of 6,7-dimethyl-8-ribityllumazine by condensation of 5-amino-6-(D-ribitylamino)uracil with 3,4-dihydroxy-2-butanone 4-phosphate. This is the penultimate step in the biosynthesis of riboflavin. The sequence is that of 6,7-dimethyl-8-ribityllumazine synthase from Wigglesworthia glossinidia brevipalpis.